Here is a 298-residue protein sequence, read N- to C-terminus: D-alanine--D-alanine ligase (298 aa).

The ATP-grasp domain maps to 97–290 (FYSLFKNYIQ…FDELINIIIK (194 aa)). 124–173 (PFIIKPRKSGSSKGVYIIHNENEYKFYLEKDLKEFQEVLVQEYIKGREIT) lines the ATP pocket. Positions 245, 257, and 259 each coordinate Mg(2+).

Belongs to the D-alanine--D-alanine ligase family. Mg(2+) serves as cofactor. Mn(2+) is required as a cofactor.

The protein localises to the cytoplasm. It carries out the reaction 2 D-alanine + ATP = D-alanyl-D-alanine + ADP + phosphate + H(+). Its pathway is cell wall biogenesis; peptidoglycan biosynthesis. In terms of biological role, cell wall formation. This Petrotoga mobilis (strain DSM 10674 / SJ95) protein is D-alanine--D-alanine ligase.